Reading from the N-terminus, the 63-residue chain is UPF0434 protein BAV2101 (63 aa).

It belongs to the UPF0434 family.

This is UPF0434 protein BAV2101 from Bordetella avium (strain 197N).